We begin with the raw amino-acid sequence, 158 residues long: 6,7-dimethyl-8-ribityllumazine synthase (158 aa).

5-amino-6-(D-ribitylamino)uracil is bound by residues F18, S50 to D52, and A74 to I76. Residue E79 to T80 participates in (2S)-2-hydroxy-3-oxobutyl phosphate binding. H82 serves as the catalytic Proton donor. Residue L107 coordinates 5-amino-6-(D-ribitylamino)uracil. A (2S)-2-hydroxy-3-oxobutyl phosphate-binding site is contributed by R122.

It belongs to the DMRL synthase family.

The catalysed reaction is (2S)-2-hydroxy-3-oxobutyl phosphate + 5-amino-6-(D-ribitylamino)uracil = 6,7-dimethyl-8-(1-D-ribityl)lumazine + phosphate + 2 H2O + H(+). It functions in the pathway cofactor biosynthesis; riboflavin biosynthesis; riboflavin from 2-hydroxy-3-oxobutyl phosphate and 5-amino-6-(D-ribitylamino)uracil: step 1/2. Catalyzes the formation of 6,7-dimethyl-8-ribityllumazine by condensation of 5-amino-6-(D-ribitylamino)uracil with 3,4-dihydroxy-2-butanone 4-phosphate. This is the penultimate step in the biosynthesis of riboflavin. This chain is 6,7-dimethyl-8-ribityllumazine synthase, found in Sulfolobus acidocaldarius (strain ATCC 33909 / DSM 639 / JCM 8929 / NBRC 15157 / NCIMB 11770).